The primary structure comprises 1820 residues: Afadin (1820 aa).

Residues 39–133 (FHGVMRFYFQ…GRFVLKNEND (95 aa)) form the Ras-associating 1 domain. Residues 129 to 196 (KNENDAIPAK…PSQGDDSENS (68 aa)) form a disordered region. Residues 146-186 (EKQEKEGVIQNFKRTLSKKEKKEKKKKEKEALRQASDKEER) are a coiled coil. The span at 160–172 (TLSKKEKKEKKKK) shows a compositional bias: basic residues. A compositionally biased stretch (basic and acidic residues) spans 173–189 (EKEALRQASDKEERPSQ). Phosphoserine is present on residues S216, S246, and S256. One can recognise a Ras-associating 2 domain in the interval 246-348 (SGGTLRIYAD…LVFQLKRRPP (103 aa)). Over residues 356–371 (KKHVEGKSLKGKDRAD) the composition is skewed to basic and acidic residues. The tract at residues 356–377 (KKHVEGKSLKGKDRADGSGYGS) is disordered. Residues S391 and S424 each carry the phosphoserine modification. The FHA domain maps to 426–492 (TEVGTEKFDD…LQSGMRLQFG (67 aa)). Residues S512, S557, S562, S655, S1083, S1107, S1126, S1140, S1143, S1172, S1173, S1182, and S1199 each carry the phosphoserine modification. The segment at 538 to 569 (GDVHSGTALPASRSTTRLDSDRVSSASSTAER) is disordered. Positions 653-908 (DISPTERTHK…IENVVAVAEN (256 aa)) constitute a Dilute domain. Positions 1007–1093 (IITVTLKKQN…VVTLEVAKQG (87 aa)) constitute a PDZ domain. The interval 1107-1194 (SPMMQRISDR…GKGPYTSGTA (88 aa)) is disordered. The segment covering 1113-1128 (ISDRRGSGKPRPKSEG) has biased composition (basic and acidic residues). A compositionally biased stretch (polar residues) spans 1132 to 1143 (YNNSAQNGSPES). Basic and acidic residues predominate over residues 1152 to 1172 (SEPKKLPGDDRLMKNRADHRS). Positions 1203–1222 (GNLCTEEQSPPPRPEAYPIP) are disordered. T1232 is modified (phosphothreonine). Disordered stretches follow at residues 1235-1278 (ASKS…SQEE), 1308-1527 (QSSS…KQQQ), and 1567-1716 (RLQE…LKTQ). S1238 carries the post-translational modification Phosphoserine. The span at 1252 to 1262 (YEEKPHVHTES) shows a compositional bias: basic and acidic residues. S1275 is modified (phosphoserine). Residues 1309–1318 (SSSVESSTSS) show a composition bias toward low complexity. A compositionally biased stretch (polar residues) spans 1325–1337 (SSKSVTPASTLTK). A Phosphoserine modification is found at S1328. T1330 bears the Phosphothreonine mark. Positions 1364 to 1373 (LPPPPPPPPV) are enriched in pro residues. Over residues 1407 to 1440 (EWKKREEHQRWYEKEKARLEEERERKRREQERKL) the composition is skewed to basic and acidic residues. Residues 1410 to 1446 (KREEHQRWYEKEKARLEEERERKRREQERKLGQMRSQ) adopt a coiled-coil conformation. Positions 1443–1457 (MRSQTLNPASFSPLA) are enriched in polar residues. Basic and acidic residues predominate over residues 1487–1503 (TIERKDLQYITISKEEL). Phosphoserine is present on residues S1499 and S1510. Over residues 1513-1526 (PWKRDAREKLEKQQ) the composition is skewed to basic and acidic residues. The stretch at 1523 to 1561 (EKQQQMHIVDMLSKEIHELQNKVDRTAEESDRLRKLMLE) forms a coiled coil. A compositionally biased stretch (acidic residues) spans 1576 to 1587 (EDDDEEEDDDVD). Residues 1593–1665 (QRLEAERRAR…SRLEAERRRQ (73 aa)) adopt a coiled-coil conformation. A compositionally biased stretch (basic and acidic residues) spans 1595-1675 (LEAERRARMQ…HEEAARRLLE (81 aa)). 4 positions are modified to phosphoserine: S1694, S1719, S1770, and S1795. The interval 1734 to 1820 (EEEDYGPAGP…TELENELNTK (87 aa)) is disordered. Residues 1759–1772 (APREAREKLTRSQD) are compositionally biased toward basic and acidic residues. The segment covering 1800-1820 (VSDKVKASRKLTELENELNTK) has biased composition (basic and acidic residues). Residue K1803 is modified to N6-acetyllysine.

As to quaternary structure, homodimer. Interacts with F-actin, nectin and NECTIN3. Essential for the association of nectin and E-cadherin. Isoform 2/s-afadin does not interact with F-actin. Interacts with ZO-1 and occludin, but probably in an indirect manner. Interacts with RIT1, RIT2, NRXN1 and BCR. Interacts with ADAM10; the interaction locks ADAM10 at adherens junctions following ADAM10 recruitment to adherens junctions by TSPAN33. Isoform 1 is expressed only in a restricted set of epithelial structures during early embryogenesis.

The protein resides in the cell junction. It is found in the adherens junction. Belongs to an adhesion system, probably together with the E-cadherin-catenin system, which plays a role in the organization of homotypic, interneuronal and heterotypic cell-cell adherens junctions (AJs). Nectin- and actin-filament-binding protein that connects nectin to the actin cytoskeleton. May play a key role in the organization of epithelial structures of the embryonic ectoderm. Essential for the organization of adherens junctions. This is Afadin from Mus musculus (Mouse).